Here is a 455-residue protein sequence, read N- to C-terminus: Virion host shutoff protein (455 aa).

The protein belongs to the herpesviridae VHS protein family.

Its subcellular location is the virion. In terms of biological role, minor structural protein that acts as an endoribonuclease during lytic infection. Degrades host mRNAs in the cytoplasm by cutting them at preferred sites, including some in regions of translation initiation. The chain is Virion host shutoff protein (17) from Homo sapiens (Human).